The primary structure comprises 297 residues: MTVVVEGQQRTHELVIITGMSGAGKTVAIQSFEDLGYYCIDNLPPALLTTFLTLLRDSGKNSTRIAAVMDMRGGNFFDALIGALDHILKEGDIVARILFLDADDATLVRRYKETRRAHPLAVSGLPLDGIKQERALLSEVKGRANFVYNTSNMKPKQLREKIVKEFASEADTIFTVNIMSFGFKHGMPIDADLVFDVRFLKNPYYVEELRPKTGLQTEVSSYVLALEDTQILIQKLTDLFDFMIPLYRQEGKSQLVIAFGCTGGQHRSVTLAEFFGAYLASKENTVITHRDINRRKE.

19 to 26 (GMSGAGKT) contributes to the ATP binding site. 70–73 (DMRG) serves as a coordination point for GTP.

Belongs to the RapZ-like family.

Its function is as follows. Displays ATPase and GTPase activities. The sequence is that of Nucleotide-binding protein Bsph_0448 from Lysinibacillus sphaericus (strain C3-41).